Here is a 606-residue protein sequence, read N- to C-terminus: Melanoma-associated antigen D2 (606 aa).

2 disordered regions span residues methionine 1–threonine 29 and serine 52–arginine 204. The residue at position 2 (serine 2) is an N-acetylserine. Position 5 is a phosphoserine (serine 5). Threonine 72 is subject to Phosphothreonine. Positions proline 79–lysine 100 are enriched in polar residues. Positions glutamate 122–aspartate 131 are enriched in basic and acidic residues. Over residues glutamate 142–glutamate 164 the composition is skewed to low complexity. Position 157 is a phosphoserine (serine 157). The span at lysine 171 to lysine 181 shows a compositional bias: basic residues. A phosphoserine mark is found at serine 190, serine 191, serine 194, serine 197, serine 244, and serine 247. Residues proline 248 to alanine 260 are compositionally biased toward basic residues. The interval proline 248–aspartate 275 is disordered. A phosphoserine mark is found at serine 264 and serine 265. The MAGE domain occupies leucine 279–alanine 478. The disordered stretch occupies residues glycine 534 to alanine 563.

Interacts with GNAS.

Functionally, regulates the expression, localization to the plasma membrane and function of the sodium chloride cotransporters SLC12A1 and SLC12A3, two key components of salt reabsorption in the distal renal tubule. In Pongo abelii (Sumatran orangutan), this protein is Melanoma-associated antigen D2 (MAGED2).